A 398-amino-acid polypeptide reads, in one-letter code: Galactose-3-O-sulfotransferase 2 (398 aa).

At 1 to 11 (MLSALGGLQRC) the chain is on the cytoplasmic side. The helical; Signal-anchor for type II membrane protein transmembrane segment at 12-29 (FWAILLLALTVSLLAGFL) threads the bilayer. Residues 30-398 (HKDVRLLMPL…PPKNIPFLGA (369 aa)) lie on the Lumenal side of the membrane. 6 N-linked (GlcNAc...) asparagine glycosylation sites follow: N77, N133, N180, N288, N330, and N360.

This sequence belongs to the galactose-3-O-sulfotransferase family.

It is found in the golgi apparatus. It localises to the golgi stack membrane. The protein operates within protein modification; carbohydrate sulfation. Its activity is regulated as follows. Strongly inhibited by Cu(2+) and Zn(2+). Functionally, transfers a sulfate group to the hydroxyl group at C3 of non-reducing beta-galactosyl residues. Acts both on type 1 (Gal-beta-1,3-GlcNAc) and type 2 (Gal-beta-1,4-GlcNAc) chains with similar efficiency. This Sus scrofa (Pig) protein is Galactose-3-O-sulfotransferase 2 (GAL3ST2).